The primary structure comprises 240 residues: Insulin-like growth factor-binding protein 3 receptor (240 aa).

A signal peptide spans 1–38 (MGNCQAGHNLHLCLAHHPPLVCATLILLLLGLSGLGLG). The Extracellular segment spans residues 39-204 (SFLLTHRTGL…SEELALCGSR (166 aa)). N73, N101, and N167 each carry an N-linked (GlcNAc...) asparagine glycan. A helical transmembrane segment spans residues 205–225 (LLVLGSFLLLFCGLLCCVTAM). The Cytoplasmic portion of the chain corresponds to 226–240 (CFHPRRESHWSRTRL).

Interacts with IGFBP3. Interacts with CASP8. Widely expressed in normal tissues but suppressed in prostate and breast tumor.

Its subcellular location is the cell membrane. Its function is as follows. Cell death receptor specific for IGFBP3, may mediate caspase-8-dependent apoptosis upon ligand binding. The chain is Insulin-like growth factor-binding protein 3 receptor (TMEM219) from Homo sapiens (Human).